Reading from the N-terminus, the 282-residue chain is Nucleotide-binding protein Ping_2894 (282 aa).

8-15 (GRSGSGKT) provides a ligand contact to ATP. 56 to 59 (DIRN) is a binding site for GTP.

Belongs to the RapZ-like family.

Displays ATPase and GTPase activities. The polypeptide is Nucleotide-binding protein Ping_2894 (Psychromonas ingrahamii (strain DSM 17664 / CCUG 51855 / 37)).